Here is a 22-residue protein sequence, read N- to C-terminus: Superoxide dismutase [Cu-Zn] 2 (22 aa).

It belongs to the Cu-Zn superoxide dismutase family. In terms of assembly, homodimer. Cu cation serves as cofactor. It depends on Zn(2+) as a cofactor. Dominant isozyme in roots.

The protein resides in the cytoplasm. It catalyses the reaction 2 superoxide + 2 H(+) = H2O2 + O2. In terms of biological role, destroys radicals which are normally produced within the cells and which are toxic to biological systems. In Picea abies (Norway spruce), this protein is Superoxide dismutase [Cu-Zn] 2.